The following is a 678-amino-acid chain: Ribonuclease Z 2, mitochondrial (678 aa).

The N-terminal 37 residues, 1-37, are a transit peptide targeting the mitochondrion; that stretch reads MKASLLVPRRALLFGQLLPPKYSWYSVKRWQSQLTFR.

Belongs to the RNase Z family. Requires Zn(2+) as cofactor.

It localises to the mitochondrion. It is found in the cytoplasm. The catalysed reaction is Endonucleolytic cleavage of RNA, removing extra 3' nucleotides from tRNA precursor, generating 3' termini of tRNAs. A 3'-hydroxy group is left at the tRNA terminus and a 5'-phosphoryl group is left at the trailer molecule.. Zinc phosphodiesterase, which displays some tRNA 3'-processing endonuclease activity. May be involved in tRNA maturation, by removing a 3'-trailer from precursor tRNA. The protein is Ribonuclease Z 2, mitochondrial (trz2) of Schizosaccharomyces pombe (strain 972 / ATCC 24843) (Fission yeast).